We begin with the raw amino-acid sequence, 95 residues long: Glutamyl-tRNA(Gln) amidotransferase subunit C (95 aa).

It belongs to the GatC family. In terms of assembly, heterotrimer of A, B and C subunits.

The enzyme catalyses L-glutamyl-tRNA(Gln) + L-glutamine + ATP + H2O = L-glutaminyl-tRNA(Gln) + L-glutamate + ADP + phosphate + H(+). It catalyses the reaction L-aspartyl-tRNA(Asn) + L-glutamine + ATP + H2O = L-asparaginyl-tRNA(Asn) + L-glutamate + ADP + phosphate + 2 H(+). Allows the formation of correctly charged Asn-tRNA(Asn) or Gln-tRNA(Gln) through the transamidation of misacylated Asp-tRNA(Asn) or Glu-tRNA(Gln) in organisms which lack either or both of asparaginyl-tRNA or glutaminyl-tRNA synthetases. The reaction takes place in the presence of glutamine and ATP through an activated phospho-Asp-tRNA(Asn) or phospho-Glu-tRNA(Gln). The chain is Glutamyl-tRNA(Gln) amidotransferase subunit C from Rhizobium meliloti (strain 1021) (Ensifer meliloti).